Reading from the N-terminus, the 94-residue chain is MAPLKMLALVTLLLGASLQHIHAARGTNVGRECCLEYFKGAIPLRKLKTWYQTSEDCSRDAIVFVTVQGRAICSDPNNKRVKNAVKYLQSLERS.

The N-terminal stretch at 1 to 23 (MAPLKMLALVTLLLGASLQHIHA) is a signal peptide. 2 disulfides stabilise this stretch: C33/C57 and C34/C73.

This sequence belongs to the intercrine beta (chemokine CC) family. In terms of tissue distribution, constitutively expressed in thymus. Detected at lower levels in the lung, colon and small intestine. Expressed in stimulated peripheral blood mononuclear cells, but not in resting cells.

Its subcellular location is the secreted. Its function is as follows. Chemokine, which displays chemotactic activity for T lymphocytes, preferentially Th2 cells, but not monocytes or granulocytes. Therefore plays an important role in a wide range of inflammatory and immunological processes. Acts by binding to CCR4 at T-cell surface. Mediates GM-CSF/CSF2-driven pain and inflammation. In the brain, required to maintain the typical, highly branched morphology of hippocampal microglia under homeostatic conditions. May be important for the appropriate adaptation of microglial morphology and synaptic plasticity to acute lipopolysaccharide (LPS)-induced neuroinflammation. Plays a role in wound healing, mainly by inducing fibroblast migration into the wound. This chain is C-C motif chemokine 17 (CCL17), found in Homo sapiens (Human).